Here is a 220-residue protein sequence, read N- to C-terminus: Claudin-22 (220 aa).

The Cytoplasmic portion of the chain corresponds to 1–10 (MALVFRTVAQ). A helical membrane pass occupies residues 11–30 (LAGVSLSLLGWVLSCLTNYL). At 31–81 (PHWKNLNLDLNEMENWTMGLWQTCVIQEEVGMQCKDFDSFLALPAELRVSR) the chain is on the extracellular side. The helical transmembrane segment at 82-102 (ILMFLSNGLGFLGLLVSGFGL) threads the bilayer. The Cytoplasmic portion of the chain corresponds to 103 to 117 (DCLRIGESQRDLKRR). The chain crosses the membrane as a helical span at residues 118 to 138 (LLILGGILSWASGVTALVPVS). Residues 139 to 164 (WVAHKTVQEFWDENVPDFVPRWEFGE) are Extracellular-facing. The chain crosses the membrane as a helical span at residues 165–185 (ALFLGWFAGLSLLLGGCLLHC). Topologically, residues 186–220 (AACSSHAPLASGHYAVAQTQDHHQELETRNTNLKH) are cytoplasmic.

Belongs to the claudin family.

It localises to the cell junction. The protein resides in the tight junction. The protein localises to the cell membrane. Functionally, plays a major role in tight junction-specific obliteration of the intercellular space, through calcium-independent cell-adhesion activity. This is Claudin-22 (CLDN22) from Homo sapiens (Human).